Here is a 1450-residue protein sequence, read N- to C-terminus: DNA-directed RNA polymerase RPB1 homolog (1450 aa).

This sequence belongs to the RNA polymerase beta' chain family. As to quaternary structure, part of the viral DNA-directed RNA polymerase that consists of 8 polII-like subunits (RPB1, RPB2, RPB3, RPB5, RPB6, RPB7, RPB9, RPB10), a capping enzyme and a termination factor.

Its subcellular location is the virion. It carries out the reaction RNA(n) + a ribonucleoside 5'-triphosphate = RNA(n+1) + diphosphate. Functionally, catalytic component of the DNA-directed RNA polymerase (RNAP) that catalyzes the transcription in the cytoplasm of viral DNA into RNA using the four ribonucleoside triphosphates as substrates. Forms the polymerase active center together with RPB2. Part of the core element with the central large cleft, the clamp element that moves to open and close the cleft and the jaws that are thought to grab the incoming DNA template. The protein is DNA-directed RNA polymerase RPB1 homolog of Ornithodoros (relapsing fever ticks).